The chain runs to 122 residues: Large ribosomal subunit protein uL14 (122 aa).

It belongs to the universal ribosomal protein uL14 family. As to quaternary structure, part of the 50S ribosomal subunit. Forms a cluster with proteins L3 and L19. In the 70S ribosome, L14 and L19 interact and together make contacts with the 16S rRNA in bridges B5 and B8.

In terms of biological role, binds to 23S rRNA. Forms part of two intersubunit bridges in the 70S ribosome. This is Large ribosomal subunit protein uL14 from Mycoplasma mobile (strain ATCC 43663 / 163K / NCTC 11711) (Mesomycoplasma mobile).